The following is a 438-amino-acid chain: Iroquois-class homeodomain protein IRX-6 (438 aa).

The homeobox DNA-binding region spans 143-205 (SAGRRKNATR…NARRRLKKEN (63 aa)). Disordered stretches follow at residues 205–270 (NKMT…EAAV) and 388–438 (PRDS…GAEG). Over residues 214 to 223 (KGGEERKADS) the composition is skewed to basic and acidic residues. Residues 252 to 268 (LEDLEEEEEEEEAEEEA) show a composition bias toward acidic residues.

This sequence belongs to the TALE/IRO homeobox family. Expressed in a subset of retinal ganglion cells and bipolar cells; including in type 2 and type 3a bipolar cells.

The protein resides in the nucleus. Transcription factor. Binds to the iroquois binding site (IBS) motif of target genes to regulate gene expression; functions as a transcriptional activator or repressor. Modulates expression of RCVRN, VSX1, BHLHE22/BHLHB5 and TACR3/Nk3r. Required downstream of retinal bipolar cell specification for the terminal differentiation of type 2, type 3a and possibly type 6 bipolar cells. This chain is Iroquois-class homeodomain protein IRX-6 (Irx6), found in Mus musculus (Mouse).